A 514-amino-acid polypeptide reads, in one-letter code: 23S rRNA (uracil(1939)-C(5))-methyltransferase RlmD (514 aa).

4 residues coordinate [4Fe-4S] cluster: C70, C76, C79, and C158. S-adenosyl-L-methionine contacts are provided by Q272, F301, N306, E322, N350, and D371. The active-site Nucleophile is the C398.

The protein belongs to the class I-like SAM-binding methyltransferase superfamily. RNA M5U methyltransferase family. RlmD subfamily.

The catalysed reaction is uridine(1939) in 23S rRNA + S-adenosyl-L-methionine = 5-methyluridine(1939) in 23S rRNA + S-adenosyl-L-homocysteine + H(+). Catalyzes the formation of 5-methyl-uridine at position 1939 (m5U1939) in 23S rRNA. The sequence is that of 23S rRNA (uracil(1939)-C(5))-methyltransferase RlmD from Chromobacterium violaceum (strain ATCC 12472 / DSM 30191 / JCM 1249 / CCUG 213 / NBRC 12614 / NCIMB 9131 / NCTC 9757 / MK).